Reading from the N-terminus, the 220-residue chain is MAKSALVWLASVCLVFNILSLPFLALGLSSCGGSCQTLNDYEGQLICINGECNDDPEVGTHICGGNSSTPSPPPPSTCQPSGTLACKGGKPKNTYTCSPPITSSTPAVLTNNNFEKGGDGGGPSACDNKYHDNSERIVALSTGWYNGGSRCGKMIRITAQNGRSVLAKVVDECDSMHGCDKEHAGQPPCDNNIVDGSNAVWNALGLDINIGEVDVTWSMA.

The N-terminal stretch at 1–27 (MAKSALVWLASVCLVFNILSLPFLALG) is a signal peptide.

The protein belongs to the kiwellin family. Expressed in ripening fruits.

It localises to the secreted. This Vitis vinifera (Grape) protein is Ripening-related protein grip22 (grip22).